Consider the following 389-residue polypeptide: Liposome tubulation protein MamY (389 aa).

Residues 1 to 31 lie on the Cytoplasmic side of the membrane; the sequence is MAIAAIMGDVLMLMGFNKAAFGKLNSASRAA. The chain crosses the membrane as a helical span at residues 32 to 52; it reads LIGAVIWAVLSIVYLTIFNGW. Over 53 to 62 the chain is Lumenal; the sequence is KNLFTMLPHE. A helical transmembrane segment spans residues 63 to 83; sequence FFIVLLSIALPIGLTVLILML. Topologically, residues 84-389 are cytoplasmic; the sequence is SRIVKSVDTL…TETAPDSGMD (306 aa).

Belongs to the magnetosome MamY family.

It localises to the magnetosome membrane. Functionally, causes tubulation when added to magnetosome-derived liposomes, binds liposomes; may be involved in constriction of the cell inner membrane to form mature magnetosomes. Binds preferentially to cardiolipin, a component of bacterial membranes, with very poor to no binding of other tested (phospho)lipids. Addition of cardiolipin to magnetosome-derived lipids increases tubulation. May function with MamX, MamZ amd Mms6. The sequence is that of Liposome tubulation protein MamY from Paramagnetospirillum magneticum (strain ATCC 700264 / AMB-1) (Magnetospirillum magneticum).